A 183-amino-acid chain; its full sequence is MDVLELYRRTGALLEGHFLLRSGMHSPFFLQSAALLQHPLYAEAVGEALGKLFKDEKVDFVIAPAIGGVVLSFVVAKALGARALFAEKDGRGGMLIRKGLTVNPGDRFLAVEDVVTTGESVRKAIRAAEARGGVLVGVGAIVDRSGGRAAFGVPFRALLALEVPHYPEEACPLCREGVPLEEV.

5-phospho-alpha-D-ribose 1-diphosphate-binding positions include Arg21, Lys88, and 112–120 (EDVVTTGES). Orotate contacts are provided by Thr116 and Arg144.

Belongs to the purine/pyrimidine phosphoribosyltransferase family. PyrE subfamily. Homodimer. It depends on Mg(2+) as a cofactor.

It catalyses the reaction orotidine 5'-phosphate + diphosphate = orotate + 5-phospho-alpha-D-ribose 1-diphosphate. It participates in pyrimidine metabolism; UMP biosynthesis via de novo pathway; UMP from orotate: step 1/2. Catalyzes the transfer of a ribosyl phosphate group from 5-phosphoribose 1-diphosphate to orotate, leading to the formation of orotidine monophosphate (OMP). The protein is Orotate phosphoribosyltransferase of Thermus thermophilus (strain ATCC 27634 / DSM 579 / HB8).